A 336-amino-acid polypeptide reads, in one-letter code: Ferredoxin--NADP reductase (336 aa).

FAD-binding residues include Glu-34, Gln-42, Tyr-47, Val-87, Phe-121, Asp-286, and Ser-326.

The protein belongs to the ferredoxin--NADP reductase type 2 family. Homodimer. FAD is required as a cofactor.

It catalyses the reaction 2 reduced [2Fe-2S]-[ferredoxin] + NADP(+) + H(+) = 2 oxidized [2Fe-2S]-[ferredoxin] + NADPH. This chain is Ferredoxin--NADP reductase, found in Leuconostoc mesenteroides subsp. mesenteroides (strain ATCC 8293 / DSM 20343 / BCRC 11652 / CCM 1803 / JCM 6124 / NCDO 523 / NBRC 100496 / NCIMB 8023 / NCTC 12954 / NRRL B-1118 / 37Y).